Here is a 257-residue protein sequence, read N- to C-terminus: Regulator of G-protein signaling 7-binding protein (257 aa).

Disordered regions lie at residues 1-45 (MSSA…SAHK) and 174-196 (ETPA…WQVS). Basic and acidic residues predominate over residues 32–45 (DWERRGSGSESAHK). A compositionally biased stretch (low complexity) spans 180–192 (DSSSSPVDSQQHS). Residues 242–247 (RRRKRR) carry the Nuclear localization signal motif. Residues Cys-252 and Cys-253 are each lipidated (S-palmitoyl cysteine).

Belongs to the RGS7BP/RGS9BP family. Interacts with 'R7' family proteins RGS6, RGS7, RGS9 and RGS11. Component of some R7-Gbeta5 complex composed of some R7 protein (RGS6, RGS7, RGS9 or RGS11), Gbeta5 (GNB5) and RGS7BP. Palmitoylated. Undergoes rapid palmitoylation turnover. De novo and turnover palmitoylation are both mediated by ZDHHC2. Palmitoylation regulates the cell membrane and nuclear shuttling and the regulation of GPCR signaling. Upon depalmitoylation, it is targeted from the plasma membrane into the nucleus. GPCR signaling inhibits depalmitoylation and promotes localization to the plasma membrane.

It localises to the nucleus. The protein localises to the cytoplasm. It is found in the cell membrane. In terms of biological role, regulator of G protein-coupled receptor (GPCR) signaling. Regulatory subunit of the R7-Gbeta5 complexes that acts by controlling the subcellular location of the R7-Gbeta5 complexes. When palmitoylated, it targets the R7-Gbeta5 complexes to the plasma membrane, leading to inhibit G protein alpha subunits. When it is unpalmitoylated, the R7-Gbeta5 complexes undergo a nuclear/cytoplasmic shuttling. May also act by controlling the proteolytic stability of R7 proteins, probably by protecting them from degradation. This Homo sapiens (Human) protein is Regulator of G-protein signaling 7-binding protein (RGS7BP).